A 495-amino-acid polypeptide reads, in one-letter code: UDP-N-acetylmuramate--L-alanine ligase (495 aa).

120-126 (GSHGKTT) is a binding site for ATP.

This sequence belongs to the MurCDEF family.

The protein localises to the cytoplasm. It catalyses the reaction UDP-N-acetyl-alpha-D-muramate + L-alanine + ATP = UDP-N-acetyl-alpha-D-muramoyl-L-alanine + ADP + phosphate + H(+). Its pathway is cell wall biogenesis; peptidoglycan biosynthesis. Cell wall formation. This is UDP-N-acetylmuramate--L-alanine ligase from Rickettsia prowazekii (strain Madrid E).